A 413-amino-acid polypeptide reads, in one-letter code: Serine hydroxymethyltransferase (413 aa).

(6S)-5,6,7,8-tetrahydrofolate-binding positions include leucine 117 and 121–123 (GHL). N6-(pyridoxal phosphate)lysine is present on lysine 226. (6S)-5,6,7,8-tetrahydrofolate is bound by residues glutamate 241 and 349–351 (SPF).

It belongs to the SHMT family. As to quaternary structure, homodimer. The cofactor is pyridoxal 5'-phosphate.

The protein localises to the cytoplasm. It carries out the reaction (6R)-5,10-methylene-5,6,7,8-tetrahydrofolate + glycine + H2O = (6S)-5,6,7,8-tetrahydrofolate + L-serine. It participates in one-carbon metabolism; tetrahydrofolate interconversion. The protein operates within amino-acid biosynthesis; glycine biosynthesis; glycine from L-serine: step 1/1. In terms of biological role, catalyzes the reversible interconversion of serine and glycine with tetrahydrofolate (THF) serving as the one-carbon carrier. This reaction serves as the major source of one-carbon groups required for the biosynthesis of purines, thymidylate, methionine, and other important biomolecules. Also exhibits THF-independent aldolase activity toward beta-hydroxyamino acids, producing glycine and aldehydes, via a retro-aldol mechanism. The polypeptide is Serine hydroxymethyltransferase (Halalkalibacterium halodurans (strain ATCC BAA-125 / DSM 18197 / FERM 7344 / JCM 9153 / C-125) (Bacillus halodurans)).